Consider the following 195-residue polypeptide: A-type ATP synthase subunit E (195 aa).

Belongs to the V-ATPase E subunit family. In terms of assembly, has multiple subunits with at least A(3), B(3), C, D, E, F, H, I and proteolipid K(x).

The protein localises to the cell membrane. Component of the A-type ATP synthase that produces ATP from ADP in the presence of a proton gradient across the membrane. This chain is A-type ATP synthase subunit E, found in Halobacterium salinarum (strain ATCC 29341 / DSM 671 / R1).